The following is a 224-amino-acid chain: DeSI-like protein At4g17486 (224 aa).

A PPPDE domain is found at 26-163; the sequence is TPVYLNVYDL…FCNCLLPESI (138 aa). Active-site residues include H51 and C125. Residues 176–201 are disordered; the sequence is EFSDEDESNSEASSVSDEEGSEQHLI.

The protein belongs to the DeSI family.

This Arabidopsis thaliana (Mouse-ear cress) protein is DeSI-like protein At4g17486.